We begin with the raw amino-acid sequence, 319 residues long: Urease accessory protein UreD (319 aa).

The segment at Q298–H319 is disordered.

The protein belongs to the UreD family. UreD, UreF and UreG form a complex that acts as a GTP-hydrolysis-dependent molecular chaperone, activating the urease apoprotein by helping to assemble the nickel containing metallocenter of UreC. The UreE protein probably delivers the nickel.

The protein localises to the cytoplasm. Its function is as follows. Required for maturation of urease via the functional incorporation of the urease nickel metallocenter. The polypeptide is Urease accessory protein UreD (Synechococcus sp. (strain WH7805)).